The chain runs to 403 residues: Argininosuccinate synthase (403 aa).

ATP is bound at residue A10 to S18. Residues Y88 and S93 each contribute to the L-citrulline site. ATP is bound at residue G118. L-aspartate is bound by residues T120, N124, and D125. Residue N124 coordinates L-citrulline. 5 residues coordinate L-citrulline: R128, S177, S186, E263, and Y275.

This sequence belongs to the argininosuccinate synthase family. Type 1 subfamily. As to quaternary structure, homotetramer.

It is found in the cytoplasm. It catalyses the reaction L-citrulline + L-aspartate + ATP = 2-(N(omega)-L-arginino)succinate + AMP + diphosphate + H(+). The protein operates within amino-acid biosynthesis; L-arginine biosynthesis; L-arginine from L-ornithine and carbamoyl phosphate: step 2/3. In Clostridium perfringens (strain ATCC 13124 / DSM 756 / JCM 1290 / NCIMB 6125 / NCTC 8237 / Type A), this protein is Argininosuccinate synthase.